Here is a 105-residue protein sequence, read N- to C-terminus: DNA-directed RNA polymerase subunit omega (105 aa).

Belongs to the RNA polymerase subunit omega family. As to quaternary structure, the RNAP catalytic core consists of 2 alpha, 1 beta, 1 beta' and 1 omega subunit. When a sigma factor is associated with the core the holoenzyme is formed, which can initiate transcription.

The enzyme catalyses RNA(n) + a ribonucleoside 5'-triphosphate = RNA(n+1) + diphosphate. Functionally, promotes RNA polymerase assembly. Latches the N- and C-terminal regions of the beta' subunit thereby facilitating its interaction with the beta and alpha subunits. The polypeptide is DNA-directed RNA polymerase subunit omega (Streptococcus uberis (strain ATCC BAA-854 / 0140J)).